The following is a 96-amino-acid chain: Muconolactone Delta-isomerase (96 aa).

This sequence belongs to the muconolactone Delta-isomerase family. Homodecamer.

It catalyses the reaction (S)-muconolactone = (4,5-dihydro-5-oxofuran-2-yl)-acetate. Its pathway is aromatic compound metabolism; beta-ketoadipate pathway; 5-oxo-4,5-dihydro-2-furylacetate from catechol: step 3/3. The protein is Muconolactone Delta-isomerase (catC) of Pseudomonas putida (Arthrobacter siderocapsulatus).